A 251-amino-acid polypeptide reads, in one-letter code: Probable transcriptional regulatory protein MMAR_2098 (251 aa).

It belongs to the TACO1 family.

Its subcellular location is the cytoplasm. This is Probable transcriptional regulatory protein MMAR_2098 from Mycobacterium marinum (strain ATCC BAA-535 / M).